Consider the following 204-residue polypeptide: Lymphotoxin-alpha (204 aa).

An N-terminal signal peptide occupies residues 1-33 (MTPPGRLYLLRVRSAPVLLLLGLLLGLPPGAQG). Residues 62–204 (PAAHLIGDPS…SSVFFGAFAL (143 aa)) form the THD domain. The N-linked (GlcNAc...) asparagine glycan is linked to asparagine 95. A disulfide bridge links cysteine 119 with cysteine 155.

It belongs to the tumor necrosis factor family. In terms of assembly, homotrimer, and heterotrimer of either two LTB and one LTA subunits or (less prevalent) two LTA and one LTB subunits. Interacts with TNFRSF14.

It is found in the secreted. It localises to the membrane. Functionally, cytokine that in its homotrimeric form binds to TNFRSF1A/TNFR1, TNFRSF1B/TNFBR and TNFRSF14/HVEM. In its heterotrimeric form with LTB binds to TNFRSF3/LTBR. Lymphotoxin is produced by lymphocytes and is cytotoxic for a wide range of tumor cells in vitro and in vivo. This chain is Lymphotoxin-alpha (LTA), found in Canis lupus familiaris (Dog).